We begin with the raw amino-acid sequence, 443 residues long: Probable nitrate/nitrite antiporter NarK2 (443 aa).

The next 12 helical transmembrane spans lie at 32–52, 66–86, 95–115, 123–143, 172–192, 210–230, 256–276, 292–312, 314–334, 346–366, 383–403, and 409–429; these read ITTF…ALVV, LFWL…IWTF, HLVT…GFAV, WVLL…SGYM, IVQF…LLGG, NATF…WVYL, SLYI…PLLI, YAFL…PISD, LGGA…ALLV, FPMF…GNAS, VIGW…TLAA, and TGGF…NFFL.

It belongs to the major facilitator superfamily. Nitrate/nitrite porter (TC 2.A.1.8) family.

It is found in the cell membrane. It catalyses the reaction nitrate(in) + nitrite(out) = nitrate(out) + nitrite(in). Its function is as follows. Probable nitrate/nitrite antiporter that may be involved in nitrate import and nitrite export during anaerobic growth. The chain is Probable nitrate/nitrite antiporter NarK2 from Thermus thermophilus.